The following is a 3902-amino-acid chain: Hybrid PKS-NRPS synthetase pynA (3902 aa).

Positions 1–25 are disordered; that stretch reads MDTPLSSSEISPRFSNTVPSSVSSM. Residues 29 to 441 enclose the Ketosynthase family 3 (KS3) domain; the sequence is ADPSVIVGLA…GTNAHVILDA (413 aa). Residues C201, H324, and H362 each act as for beta-ketoacyl synthase activity in the active site. The interval 555–868 is malonyl-CoA:ACP transacylase (MAT) domain; sequence VFTGQGAQWF…PYLASLTRGV (314 aa). The active-site For malonyltransferase activity is S647. The segment at 945–1080 is N-terminal hotdog fold; the sequence is HSILGARMPG…GLVSVETNAL (136 aa). The interval 945-1256 is dehydratase (DH) domain; that stretch reads HSILGARMPG…LEVTALGSDK (312 aa). Positions 945–1258 constitute a PKS/mFAS DH domain; it reads HSILGARMPG…VTALGSDKTD (314 aa). H977 serves as the catalytic Proton acceptor; for dehydratase activity. A C-terminal hotdog fold region spans residues 1100–1258; it reads QESIPAETLY…VTALGSDKTD (159 aa). D1164 (proton donor; for dehydratase activity) is an active-site residue. Residues 1629–1945 form an enoyl reductase (ER) domain region; it reads GLLETLVFED…MGKHTGKVVL (317 aa). The interval 1971–2143 is ketoreductase (KR) domain; that stretch reads TYLLVGGLGG…AGTTMNCGMI (173 aa). The Carrier 1 domain maps to 2251–2328; the sequence is ERTTLVLSAF…ALVTKASGLI (78 aa). S2288 bears the O-(pantetheine 4'-phosphoryl)serine mark. The span at 2337–2350 shows a compositional bias: basic and acidic residues; sequence KAENVDNEGAKGNE. A disordered region spans residues 2337-2364; the sequence is KAENVDNEGAKGNEDQEVETQQGQLNQP. Positions 2374–2816 are condensation (C) domain 7; the sequence is VPMSSFQQRL…AEVNLCGALE (443 aa). Positions 2836–3248 are adenylation (A) domain 8; that stretch reads SVGVCQRIME…NGLLTFKGRI (413 aa). In terms of domain architecture, Carrier 2 spans 3391 to 3467; that stretch reads GDDAEILQGV…AIAGMIQKQL (77 aa). S3427 carries the post-translational modification O-(pantetheine 4'-phosphoryl)serine. Residues 3515–3774 form a thioesterase (TE) domain region; it reads LTGIDTFIGL…VDFLPVDALT (260 aa).

This sequence in the C-terminal section; belongs to the NRP synthetase family.

Its pathway is secondary metabolite biosynthesis. In terms of biological role, hybrid PKS-NRPS synthetase; part of the gene cluster that mediates the biosynthesis of pyranonigrins, a family of antioxidative compounds. The first step of pyranonigrins biosynthesis is performed by the hybrid PKS-NRPS synthetase that condenses 6 malonyl-CoA units to an acetyl starter unit, to form a 1,3,5-trioxotetradecane-6,8-dienyl-ACP. The enoyl reductase (ER) domain of pynA is likely to be functional during the first two rounds of polyketide chain extension, to generate the saturated C-C bonds of the alkyl side chain. PynA subsequently forms the amide bond between the acyl chain and L-serine. Although pynA has a terminal reductase domain, it appears to require the thioesterase pynI for the release of the straight-chain intermediate from pynA via the formation of a tetramic acid pyranonigrin J. The methyltransferase pynC then coverts pyranonigrin J to pyranonigrin I via N-methylation. The FAD-dependent monooxygenase pynG catalyzes an epoxidation-mediated cyclization to form the dihydro-gamma-pyrone moiety, followed by pynD-catalyzed oxidation of the alcohol to the ketone and enolization to yield the characteristic tetramic acid-fused gamma-pyrone core of pyranonigrin H. Pyranonigrin H is substrate of pynH for dehydration-mediated exo-methylene formation from the serine side chain to produce pyranonigrin E, before the oxidase pynE reduces the exo-methylene of pyranonigrin E into a pendant methyl to form pyranonigrin G. The FAD-linked oxidoreductase pynB performs the reverse reaction and converts pyranonigrin G back to pyranonigrin E. This Aspergillus niger (strain ATCC MYA-4892 / CBS 513.88 / FGSC A1513) protein is Hybrid PKS-NRPS synthetase pynA.